We begin with the raw amino-acid sequence, 357 residues long: Chorismate synthase (357 aa).

Arg-47 lines the NADP(+) pocket. Residues 123–125, Gly-281, 296–300, and Arg-324 each bind FMN; these read RAS and KPTSS.

Belongs to the chorismate synthase family. As to quaternary structure, homotetramer. FMNH2 serves as cofactor.

The enzyme catalyses 5-O-(1-carboxyvinyl)-3-phosphoshikimate = chorismate + phosphate. Its pathway is metabolic intermediate biosynthesis; chorismate biosynthesis; chorismate from D-erythrose 4-phosphate and phosphoenolpyruvate: step 7/7. Its function is as follows. Catalyzes the anti-1,4-elimination of the C-3 phosphate and the C-6 proR hydrogen from 5-enolpyruvylshikimate-3-phosphate (EPSP) to yield chorismate, which is the branch point compound that serves as the starting substrate for the three terminal pathways of aromatic amino acid biosynthesis. This reaction introduces a second double bond into the aromatic ring system. This Chlamydia trachomatis serovar A (strain ATCC VR-571B / DSM 19440 / HAR-13) protein is Chorismate synthase.